The primary structure comprises 217 residues: MSDSTFSAKNLACVRGGRVVFAGLGFSLSAGGALVLLGPNGSGKSSLLRVLAGLLKPAHGLLAWNGEALAEDPEAHAARTHYLGHHDAVKPVLSVAENLRFWAHLHDPHAERAGRAVDAALSRFGLARLATIPGKMLSAGQKRRTNLARLLAAPSPLWLLDEPTTALDKASIKVLEDVLAEHRAAGGMVVLSTHADINMPGAQELHLDQFAVAEELP.

Positions 6–215 (FSAKNLACVR…HLDQFAVAEE (210 aa)) constitute an ABC transporter domain. ATP is bound at residue 38 to 45 (GPNGSGKS).

It belongs to the ABC transporter superfamily. CcmA exporter (TC 3.A.1.107) family. In terms of assembly, the complex is composed of two ATP-binding proteins (CcmA) and two transmembrane proteins (CcmB).

The protein localises to the cell inner membrane. The catalysed reaction is heme b(in) + ATP + H2O = heme b(out) + ADP + phosphate + H(+). Functionally, part of the ABC transporter complex CcmAB involved in the biogenesis of c-type cytochromes; once thought to export heme, this seems not to be the case, but its exact role is uncertain. Responsible for energy coupling to the transport system. The polypeptide is Cytochrome c biogenesis ATP-binding export protein CcmA (Paramagnetospirillum magneticum (strain ATCC 700264 / AMB-1) (Magnetospirillum magneticum)).